The sequence spans 358 residues: Transcriptional repressor protein KorB (358 aa).

Residues 1 to 42 (MTAAQAKTTKKNTAAAAQEAAGAAQPSGLGLDSIGDLSSLLD) show a composition bias toward low complexity. 2 disordered regions span residues 1–79 (MTAA…FSPE) and 256–305 (DPNT…DKLK). A compositionally biased stretch (acidic residues) spans 275 to 285 (AGDGQDGEDGD). The segment covering 286–305 (QDGKDAKEKGAKEPDPDKLK) has biased composition (basic and acidic residues).

This sequence belongs to the ParB family.

In conjunction with KorA, inhibits the transcription of the kilA, trfA and korAB operons. Is also involved in the negative control of the kilB operon. This Escherichia coli protein is Transcriptional repressor protein KorB (korB).